We begin with the raw amino-acid sequence, 294 residues long: Elongation factor Ts (294 aa).

Residues Thr79–Val82 are involved in Mg(2+) ion dislocation from EF-Tu.

It belongs to the EF-Ts family.

It is found in the cytoplasm. Functionally, associates with the EF-Tu.GDP complex and induces the exchange of GDP to GTP. It remains bound to the aminoacyl-tRNA.EF-Tu.GTP complex up to the GTP hydrolysis stage on the ribosome. The protein is Elongation factor Ts of Geobacillus sp. (strain WCH70).